Consider the following 527-residue polypeptide: ATP-dependent RNA helicase DBP3 (527 aa).

Over residues 1 to 11 the composition is skewed to basic residues; sequence MSKDHKDKKRK. The disordered stretch occupies residues 1–89; sequence MSKDHKDKKR…TGYSQSPALT (89 aa). Residues 12–24 are compositionally biased toward basic and acidic residues; the sequence is HSDEATEEVEKKT. Residues 25–44 show a composition bias toward basic residues; the sequence is KVSKKEKKDKKEKKEKKDKK. The span at 45-71 shows a compositional bias: basic and acidic residues; the sequence is EKKDKSEKKDKSEKKEKKEKKESEDVP. Over residues 72-89 the composition is skewed to polar residues; it reads TKSSAVVSTGYSQSPALT. Positions 119-145 match the Q motif motif; the sequence is LGFDQIDLDSRIASVISKFPTPTPIQA. Residues 148–319 enclose the Helicase ATP-binding domain; sequence WPYLLSGKDV…STFMNSPVKV (172 aa). 161–168 serves as a coordination point for ATP; it reads AETGSGKT. Residues 266–269 carry the DEAD box motif; the sequence is DEAD. The Helicase C-terminal domain occupies 348–497; sequence KLLSLLRKYQ…PVPDELLKFG (150 aa).

Belongs to the DEAD box helicase family. DDX5/DBP2 subfamily.

The protein localises to the nucleus. It is found in the nucleolus. It carries out the reaction ATP + H2O = ADP + phosphate + H(+). Its function is as follows. ATP-dependent RNA helicase required for 60S ribosomal subunit synthesis. Involved in efficient pre-rRNA processing, predominantly at site A3, which is necessary for the normal formation of 25S and 5.8S rRNAs. The protein is ATP-dependent RNA helicase DBP3 (DBP3) of Debaryomyces hansenii (strain ATCC 36239 / CBS 767 / BCRC 21394 / JCM 1990 / NBRC 0083 / IGC 2968) (Yeast).